A 607-amino-acid chain; its full sequence is Glutamine--fructose-6-phosphate aminotransferase [isomerizing] (607 aa).

Cys2 (nucleophile; for GATase activity) is an active-site residue. Residues 2–217 form the Glutamine amidotransferase type-2 domain; sequence CGIIGILGKR…DGDWAVLTRE (216 aa). SIS domains follow at residues 277 to 422 and 455 to 597; these read TVRS…QRGF and ICRN…VDQP. The active-site For Fru-6P isomerization activity is Lys602.

Homodimer.

It is found in the cytoplasm. The catalysed reaction is D-fructose 6-phosphate + L-glutamine = D-glucosamine 6-phosphate + L-glutamate. Catalyzes the first step in hexosamine metabolism, converting fructose-6P into glucosamine-6P using glutamine as a nitrogen source. This chain is Glutamine--fructose-6-phosphate aminotransferase [isomerizing], found in Bartonella henselae (strain ATCC 49882 / DSM 28221 / CCUG 30454 / Houston 1) (Rochalimaea henselae).